The following is a 242-amino-acid chain: Segregation and condensation protein A (242 aa).

The protein belongs to the ScpA family. Component of a cohesin-like complex composed of ScpA, ScpB and the Smc homodimer, in which ScpA and ScpB bind to the head domain of Smc. The presence of the three proteins is required for the association of the complex with DNA.

The protein localises to the cytoplasm. Functionally, participates in chromosomal partition during cell division. May act via the formation of a condensin-like complex containing Smc and ScpB that pull DNA away from mid-cell into both cell halves. The protein is Segregation and condensation protein A of Lactococcus lactis subsp. cremoris (strain SK11).